The primary structure comprises 524 residues: Keratin, type II cytoskeletal 71 (524 aa).

The head stretch occupies residues 1–130 (MNRQFTCKSG…DPEIQKVRAQ (130 aa)). Positions 131–166 (EREQIKALNNKFASFIDKVRFLEQQNQVLETKWELL) are coil 1A. The IF rod domain occupies 131–444 (EREQIKALNN…KLLESEECRM (314 aa)). Positions 167–185 (QQLDLNNCKNNLEPILEGY) are linker 1. Residues 186–277 (ISNLRKQLET…CLYEAEIAQI (92 aa)) form a coil 1B region. The interval 278–301 (QSHISDMSVILSMDNNRDLNLDSI) is linker 12. The segment at 302–440 (IDEVRAQYEE…ATYRKLLESE (139 aa)) is coil 2. Residues 441 to 524 (ECRMSGEFPS…QSASSKKASR (84 aa)) form a tail region. The interval 491–524 (VRGGEGRSRGSTSDYKDTLGKGSSQSASSKKASR) is disordered. The segment covering 494–509 (GEGRSRGSTSDYKDTL) has biased composition (basic and acidic residues). Positions 510 to 524 (GKGSSQSASSKKASR) are enriched in low complexity.

It belongs to the intermediate filament family. Heterodimer of a type I and a type II keratin. Associates with KRT16 and/or KRT17.

It is found in the cytoplasm. It localises to the cytoskeleton. In terms of biological role, plays a central role in hair formation. Essential component of keratin intermediate filaments in the inner root sheath (IRS) of the hair follicle. This chain is Keratin, type II cytoskeletal 71 (KRT71), found in Felis catus (Cat).